Consider the following 97-residue polypeptide: Large ribosomal subunit protein bL28 (97 aa).

The disordered stretch occupies residues 1–20 (MSRRCELTAKGPQVGHKVSH).

The protein belongs to the bacterial ribosomal protein bL28 family.

This is Large ribosomal subunit protein bL28 from Afipia carboxidovorans (strain ATCC 49405 / DSM 1227 / KCTC 32145 / OM5) (Oligotropha carboxidovorans).